We begin with the raw amino-acid sequence, 178 residues long: Imidazoleglycerol-phosphate dehydratase (178 aa).

The protein belongs to the imidazoleglycerol-phosphate dehydratase family.

The protein localises to the cytoplasm. It catalyses the reaction D-erythro-1-(imidazol-4-yl)glycerol 3-phosphate = 3-(imidazol-4-yl)-2-oxopropyl phosphate + H2O. It participates in amino-acid biosynthesis; L-histidine biosynthesis; L-histidine from 5-phospho-alpha-D-ribose 1-diphosphate: step 6/9. This chain is Imidazoleglycerol-phosphate dehydratase, found in Archaeoglobus fulgidus (strain ATCC 49558 / DSM 4304 / JCM 9628 / NBRC 100126 / VC-16).